The chain runs to 118 residues: Autophagy-related protein 8 (118 aa).

Glycine 116 carries the Phosphatidylethanolamine amidated glycine lipid modification. Residues 117–118 (SI) constitute a propeptide, removed in mature form.

The protein belongs to the ATG8 family. In terms of assembly, conjugation to phosphatidylethanolamine (PE) leads to homodimerization. Interacts with ATG1, ATG3, ATG4, ATG7 and ATG12. The C-terminal Ser-117 and Ile-118 residues of ATG8 are removed by ATG4 to expose Gly-116 at the C-terminus. This Gly-116 forms then a thioester bond with ATG7 (E1-like activating enzyme) before being transferred to ATG3 (the specific E2 conjugating enzyme), in order to be finally amidated with phosphatidylethanolamine. This lipid modification anchors ATG8 to membranes and can be reversed by ATG4, releasing soluble ATG8.

It localises to the cytoplasmic vesicle. It is found in the cvt vesicle membrane. The protein resides in the autophagosome membrane. Its subcellular location is the vacuole membrane. Functionally, ubiquitin-like modifier involved in cytoplasm to vacuole transport (Cvt) vesicles and autophagosome formation. With ATG4, mediates the delivery of the vesicles and autophagosomes to the vacuole via the microtubule cytoskeleton. Required for selective autophagic degradation of the nucleus (nucleophagy) as well as for mitophagy which contributes to regulate mitochondrial quantity and quality by eliminating the mitochondria to a basal level to fulfill cellular energy requirements and preventing excess ROS production. Also participates in membrane fusion events that take place in the early secretory pathway. Also involved in endoplasmic reticulum-specific autophagic process and is essential for the survival of cells subjected to severe ER stress. The ATG8-PE conjugate mediates tethering between adjacent membranes and stimulates membrane hemifusion, leading to expansion of the autophagosomal membrane during autophagy. Moreover not only conjugation, but also subsequent ATG8-PE deconjugation is an important step required to facilitate multiple events during macroautophagy, and especially for efficient autophagosome biogenesis, the assembly of ATG9-containing tubulovesicular clusters into phagophores/autophagosomes, and for the disassembly of PAS-associated ATG components. Contributes to conidiation by regulating the conidial levels of the conidiation-related protein CP15 and mediates fungal oxidation resistance by controlling total superoxide dismutase (SOD) activity. This is Autophagy-related protein 8 from Beauveria bassiana (strain ARSEF 2860) (White muscardine disease fungus).